A 195-amino-acid polypeptide reads, in one-letter code: Large ribosomal subunit protein bL25 (195 aa).

Belongs to the bacterial ribosomal protein bL25 family. CTC subfamily. Part of the 50S ribosomal subunit; part of the 5S rRNA/L5/L18/L25 subcomplex. Contacts the 5S rRNA. Binds to the 5S rRNA independently of L5 and L18.

This is one of the proteins that binds to the 5S RNA in the ribosome where it forms part of the central protuberance. This Chlorobium chlorochromatii (strain CaD3) protein is Large ribosomal subunit protein bL25.